We begin with the raw amino-acid sequence, 650 residues long: XK-related protein 4 (650 aa).

A compositionally biased stretch (basic and acidic residues) spans 1–15 (MAAKSDGRLKMKKSS). The tract at residues 1–44 (MAAKSDGRLKMKKSSDVAFTPLQNSDHSGSVQGLAPGLPSGSGA) is disordered. Residues 21–31 (PLQNSDHSGSV) are compositionally biased toward polar residues. The next 2 membrane-spanning stretches (helical) occupy residues 114–134 (WILA…WLAV) and 144–164 (WFGL…VFSF). A Phosphoserine modification is found at serine 200. A disordered region spans residues 200 to 238 (SAAGEGEARPSTPQRQASNASKSNIAAANSGSNSSGATR). Residues 216 to 238 (ASNASKSNIAAANSGSNSSGATR) are compositionally biased toward low complexity. A run of 8 helical transmembrane segments spans residues 248–268 (CSFC…GQIW), 306–326 (HLLA…CIIV), 331–351 (LQAL…WALA), 365–385 (KPIS…TIAA), 396–418 (VFQL…WIVH), 428–448 (WEEI…WFNV), 457–477 (LFIY…LWYL), and 487–507 (FAIP…VFML).

This sequence belongs to the XK family. Homodimer; homodimerization takes place upon caspase cleavage. Interacts with the processed C-terminus of XRCC4 (protein XRCC4, C-terminus); interaction promotes the phospholipid scramblase activity. Undergoes proteolytic processing by caspase-3 (CASP3), caspase-6 (CASP6) and caspase-7 (CASP7) to generate the XK-related protein 4, processed form, leading to its activation.

It localises to the cell membrane. The enzyme catalyses a 1,2-diacyl-sn-glycero-3-phospho-L-serine(in) = a 1,2-diacyl-sn-glycero-3-phospho-L-serine(out). Its activity is regulated as follows. Phospholipid scramblase activity is activated upon caspase cleavage to generate the XK-related protein 4, processed form. Does not act prior the onset of apoptosis. Homodimerizes upon caspase cleavage. Phospholipid scramblase activity is activated following interaction with the processed C-terminus of XRCC4 (protein XRCC4, C-terminus). Functionally, phospholipid scramblase that promotes phosphatidylserine exposure on apoptotic cell surface. Phosphatidylserine is a specific marker only present at the surface of apoptotic cells and acts as a specific signal for engulfment. This is XK-related protein 4 from Homo sapiens (Human).